The primary structure comprises 250 residues: Proteasome subunit alpha (250 aa).

The protein belongs to the peptidase T1A family. In terms of assembly, the 20S proteasome core is composed of 14 alpha and 14 beta subunits that assemble into four stacked heptameric rings, resulting in a barrel-shaped structure. The two inner rings, each composed of seven catalytic beta subunits, are sandwiched by two outer rings, each composed of seven alpha subunits. The catalytic chamber with the active sites is on the inside of the barrel. Has a gated structure, the ends of the cylinder being occluded by the N-termini of the alpha-subunits. Is capped at one or both ends by the proteasome regulatory ATPase, PAN.

It localises to the cytoplasm. Its activity is regulated as follows. The formation of the proteasomal ATPase PAN-20S proteasome complex, via the docking of the C-termini of PAN into the intersubunit pockets in the alpha-rings, triggers opening of the gate for substrate entry. Interconversion between the open-gate and close-gate conformations leads to a dynamic regulation of the 20S proteasome proteolysis activity. Component of the proteasome core, a large protease complex with broad specificity involved in protein degradation. This is Proteasome subunit alpha from Haloquadratum walsbyi (strain DSM 16790 / HBSQ001).